The primary structure comprises 378 residues: Wnt inhibitory factor 1 (378 aa).

The first 28 residues, 1–28 (MAFRTPAVQLHLKACVLLLLGGLLEAAY), serve as a signal peptide directing secretion. Positions 36–175 (MWIDANQARI…PHNAIFFKTC (140 aa)) constitute a WIF domain. N-linked (GlcNAc...) asparagine glycosylation is present at Asn86. Intrachain disulfides connect Cys138-Cys175, Cys180-Cys190, Cys184-Cys196, Cys212-Cys222, Cys216-Cys228, and Cys230-Cys239. EGF-like domains are found at residues 176-205 (QRAKCPGGCRNGGYCNERQVCECQDGFYGV), 208-240 (EKALCSPRCLNGGLCMSPGVCICPPGYFGSSCE), 243-272 (NCSTTCLNGGTCFHPGKCICAVSFEGVRCE), 272-304 (ELSKCRQPCRNGGKCTGRNKCKCSKGYHGDLCS), and 305-336 (KAVCEPSCGAHGTCVEPNRCQCREGWHGRHCN). N-linked (GlcNAc...) asparagine glycosylation is present at Asn243. 9 disulfides stabilise this stretch: Cys244–Cys254, Cys248–Cys260, Cys262–Cys271, Cys276–Cys286, Cys280–Cys292, Cys294–Cys303, Cys308–Cys318, Cys312–Cys324, and Cys326–Cys335. Residues 343-378 (VSNSQRVSPSKHKSPSVAAAKEAPETSQPSETNYVV) form a disordered region. Positions 367 to 378 (ETSQPSETNYVV) are enriched in polar residues.

In terms of tissue distribution, highly expressed in unsegmented paraxial mesoderm.

Its subcellular location is the secreted. Functionally, binds to WNT proteins and inhibits their activities. May be involved in mesoderm segmentation. This is Wnt inhibitory factor 1 (wif1) from Danio rerio (Zebrafish).